Here is a 129-residue protein sequence, read N- to C-terminus: MAALTNEQIIEAIGEKTILELSELIKAMEEKFGVTAAAPVAVVAGGAAGGGAAEEEKTEFTVTLKGLSDPGKKIGVIKEVRNVIPGLGLKEAKELVEGAPKVLKEDVSKEEAAKIKEAITAAGGEVEIA.

The protein belongs to the bacterial ribosomal protein bL12 family. Homodimer. Part of the ribosomal stalk of the 50S ribosomal subunit. Forms a multimeric L10(L12)X complex, where L10 forms an elongated spine to which 2 to 4 L12 dimers bind in a sequential fashion. Binds GTP-bound translation factors.

Forms part of the ribosomal stalk which helps the ribosome interact with GTP-bound translation factors. Is thus essential for accurate translation. The sequence is that of Large ribosomal subunit protein bL12 from Treponema denticola (strain ATCC 35405 / DSM 14222 / CIP 103919 / JCM 8153 / KCTC 15104).